Reading from the N-terminus, the 79-residue chain is uncharacterized protein (79 aa).

It belongs to the BolA/IbaG family.

This is an uncharacterized protein from Buchnera aphidicola subsp. Baizongia pistaciae (strain Bp).